The sequence spans 91 residues: Large ribosomal subunit protein bL27 (91 aa).

Positions 1–24 (MAHKKGVGSSRNGRDSNPKMRGVK) are disordered.

Belongs to the bacterial ribosomal protein bL27 family.

The chain is Large ribosomal subunit protein bL27 from Chloroflexus aggregans (strain MD-66 / DSM 9485).